Reading from the N-terminus, the 629-residue chain is Probable alpha-L-arabinofuranosidase A (629 aa).

The N-terminal stretch at 1–25 is a signal peptide; the sequence is MVALSTLSGLSALPFLFSLVQNVYG. N-linked (GlcNAc...) asparagine glycosylation is found at asparagine 36, asparagine 51, asparagine 140, asparagine 152, asparagine 168, asparagine 171, asparagine 260, asparagine 494, and asparagine 534.

The protein belongs to the glycosyl hydrolase 51 family.

The protein localises to the secreted. It carries out the reaction Hydrolysis of terminal non-reducing alpha-L-arabinofuranoside residues in alpha-L-arabinosides.. It functions in the pathway glycan metabolism; L-arabinan degradation. In terms of biological role, alpha-L-arabinofuranosidase involved in the degradation of arabinoxylan, a major component of plant hemicellulose. Acts only on small linear 1,5-alpha-linked L-arabinofuranosyl oligosaccharides. The polypeptide is Probable alpha-L-arabinofuranosidase A (abfA) (Aspergillus oryzae (strain ATCC 42149 / RIB 40) (Yellow koji mold)).